The chain runs to 92 residues: Long neurotoxin 3FTx-Oxy2 (92 aa).

Positions 1 to 21 (MKTLLLTLVVVTIVCLDLGYT) are cleaved as a signal peptide. 4 disulfide bridges follow: Cys-24/Cys-42, Cys-35/Cys-63, Cys-67/Cys-79, and Cys-80/Cys-85.

This sequence belongs to the three-finger toxin family. Long-chain subfamily. Type II alpha-neurotoxin sub-subfamily. Expressed by the venom gland.

Its subcellular location is the secreted. Its function is as follows. Binds with high affinity to muscular (alpha-1/CHRNA1) and neuronal (alpha-7/CHRNA7) nicotinic acetylcholine receptor (nAChR) and inhibits acetylcholine from binding to the receptor, thereby impairing neuromuscular and neuronal transmission. The protein is Long neurotoxin 3FTx-Oxy2 of Oxyuranus microlepidotus (Inland taipan).